We begin with the raw amino-acid sequence, 110 residues long: Transcription factor S (110 aa).

Zn(2+) contacts are provided by Cys-4, Cys-7, Cys-22, Cys-25, Cys-71, Cys-74, Cys-99, and Cys-102. The segment at 4-25 (CPKCGNLMLPDRKRKVWVCRSC) adopts a C4-type zinc-finger fold. A TFIIS-type zinc finger spans residues 67-107 (TKITCPKCGNDTAYWWEMQTRAGDEPSTIFYKCTKCGHTWR).

It belongs to the archaeal RpoM/eukaryotic RPA12/RPB9/RPC11 RNA polymerase family.

In terms of biological role, induces RNA cleavage activity in the RNA polymerase. In its presence, the cleavage activity of the RNA polymerase truncates the RNA back to position +15 in a stepwise manner by releasing mainly dinucleotides from the 3'-end of the nascent RNA. The truncated RNAs are able to continue elongation. Involved in transcriptional proofreading and fidelity. Misincorporation of nucleotides during elongation of transcription leads to arrested elongation complexes which are rescued by TFS-promoted removal of a dinucleotide from the 3'-end. TFS is able to induce a cleavage resynthesis cycle in stalled elongation complexes (resulting from the next missing nucleotide or a reduced incorporation rate of a wrong nucleotide) preventing misincorporation and enabling proofreading in a post-incorporation manner. Pausing of elongation complexes is the main determinant of TFS-induced RNA cleavage. The sequence is that of Transcription factor S from Thermococcus celer.